A 97-amino-acid chain; its full sequence is MASNSRSSISPWTFSQNKMFERALAVYDKDTPDRWHNVAKAVGGKTVEEVKRHYDILVEDLINIETGRVPLPNYKTFESNSRSINDFDTRKMKNLKI.

Positions 7–59 constitute an SANT domain; the sequence is SSISPWTFSQNKMFERALAVYDKDTPDRWHNVAKAVGGKTVEEVKRHYDILVE.

In terms of tissue distribution, expressed in the micropylar endosperm surrounding globular-stage embryos but no expression was detected elsewhere, including floral tissues.

The protein localises to the nucleus. Probable transcription factor. This Arabidopsis thaliana (Mouse-ear cress) protein is Protein RADIALIS-like 6 (RL6).